Here is a 158-residue protein sequence, read N- to C-terminus: Salt stress-responsive protein YocM (158 aa).

The region spanning 51 to 158 (GKGDASFPSM…GQAKTIVIDD (108 aa)) is the sHSP domain.

Belongs to the small heat shock protein (HSP20) family. In terms of assembly, forms homodimers, homotetramers and higher oligomers.

The protein localises to the cytoplasm. Functionally, part of the cellular protein quality control system with a specific role in salt stress response. May facilitate protein homeostasis, together with chemical chaperones that accumulate during the salt stress response. Increased levels of YocM protects against both heat and salt stress. In vitro, displays an unusual aggregase chaperone activity. This chain is Salt stress-responsive protein YocM (yocM), found in Bacillus subtilis (strain 168).